Reading from the N-terminus, the 510-residue chain is Probable cytosol aminopeptidase (510 aa).

Mn(2+) is bound by residues Lys282 and Asp287. The active site involves Lys294. Mn(2+) is bound by residues Asp305, Asp364, and Glu366. The active site involves Arg368.

It belongs to the peptidase M17 family. Mn(2+) serves as cofactor.

Its subcellular location is the cytoplasm. The catalysed reaction is Release of an N-terminal amino acid, Xaa-|-Yaa-, in which Xaa is preferably Leu, but may be other amino acids including Pro although not Arg or Lys, and Yaa may be Pro. Amino acid amides and methyl esters are also readily hydrolyzed, but rates on arylamides are exceedingly low.. The enzyme catalyses Release of an N-terminal amino acid, preferentially leucine, but not glutamic or aspartic acids.. Functionally, presumably involved in the processing and regular turnover of intracellular proteins. Catalyzes the removal of unsubstituted N-terminal amino acids from various peptides. The chain is Probable cytosol aminopeptidase from Cupriavidus metallidurans (strain ATCC 43123 / DSM 2839 / NBRC 102507 / CH34) (Ralstonia metallidurans).